We begin with the raw amino-acid sequence, 337 residues long: MKQSQPVLTIVVPCFNEEEVFQETSHQLTEVVDDLIEEKLIAEDSKILFVDDGSKDRTWALIAMESIRNKKVTGLKLACNVGHQKALLAGLHKAKNRSDCVISIDADLQDDISVIRDFMLKYHEGCEIVYGVRRSRKTDTFFKRTTALGFYRLMNKLGIKLIYNHADFRLMNKRSLEELERYPEANLFLRGIVPMIGFKSAEVLYDRKERFAGKTKYPLKKMLSFAFNGITSFSVAPIRFFTLLGFVLFFLSAVAGIGAFIQKLLGHTNAGWASLIISIWFLGGLQLMGIGIIGEYIGTIFSEVKRRPKYAIDIDLYNEQLSPLQRQEKERLEKKYS.

A run of 2 helical transmembrane segments spans residues 241 to 261 and 273 to 293; these read FTLLGFVLFFLSAVAGIGAFI and ASLIISIWFLGGLQLMGIGII.

This sequence belongs to the glycosyltransferase 2 family.

It is found in the cell membrane. This is an uncharacterized protein from Bacillus subtilis (strain 168).